A 211-amino-acid polypeptide reads, in one-letter code: Cytochrome c biogenesis ATP-binding export protein CcmA 2 (211 aa).

The region spanning 6-208 is the ABC transporter domain; that stretch reads LEARELGVRR…GAVLDLATDA (203 aa). 38–45 lines the ATP pocket; the sequence is GPNGAGKT.

Belongs to the ABC transporter superfamily. CcmA exporter (TC 3.A.1.107) family. In terms of assembly, the complex is composed of two ATP-binding proteins (CcmA) and two transmembrane proteins (CcmB).

It localises to the cell inner membrane. It catalyses the reaction heme b(in) + ATP + H2O = heme b(out) + ADP + phosphate + H(+). Part of the ABC transporter complex CcmAB involved in the biogenesis of c-type cytochromes; once thought to export heme, this seems not to be the case, but its exact role is uncertain. Responsible for energy coupling to the transport system. The sequence is that of Cytochrome c biogenesis ATP-binding export protein CcmA 2 from Cupriavidus metallidurans (strain ATCC 43123 / DSM 2839 / NBRC 102507 / CH34) (Ralstonia metallidurans).